The following is a 461-amino-acid chain: Kynurenine 3-monooxygenase (461 aa).

Transmembrane regions (helical) follow at residues 395-415 (TIMN…VTFS) and 432-452 (ILSR…AAGI).

This sequence belongs to the aromatic-ring hydroxylase family. KMO subfamily. The cofactor is FAD.

The protein resides in the mitochondrion. It is found in the membrane. It carries out the reaction L-kynurenine + NADPH + O2 + H(+) = 3-hydroxy-L-kynurenine + NADP(+) + H2O. Its pathway is cofactor biosynthesis; NAD(+) biosynthesis; quinolinate from L-kynurenine: step 1/3. In terms of biological role, catalyzes the hydroxylation of L-kynurenine (L-Kyn) to form 3-hydroxy-L-kynurenine (L-3OHKyn). Required for synthesis of quinolinic acid. The polypeptide is Kynurenine 3-monooxygenase (Caenorhabditis elegans).